The following is a 102-amino-acid chain: MYAIIETGGKQIKVEAGQAIYIEKLDVEAGETVTFDKVLFVGGENVKVGSPVVEGATVTAKVEKQGRAKKIIVFKYKAKKNNRKKQGHRQPYTKLVVEAINA.

This sequence belongs to the bacterial ribosomal protein bL21 family. In terms of assembly, part of the 50S ribosomal subunit. Contacts protein L20.

Functionally, this protein binds to 23S rRNA in the presence of protein L20. The chain is Large ribosomal subunit protein bL21 from Bacillus anthracis (strain A0248).